Reading from the N-terminus, the 128-residue chain is Probable 4-amino-4-deoxy-L-arabinose-phosphoundecaprenol flippase subunit ArnF (128 aa).

Over 1 to 2 (MG) the chain is Cytoplasmic. A helical membrane pass occupies residues 3-23 (LMWGLFSVIIASVAQLSLGFA). Over 24 to 35 (ASHLPPMTHLWD) the chain is Periplasmic. A helical transmembrane segment spans residues 36–56 (FIAALLAFGLDARILLLGLLG). The Cytoplasmic portion of the chain corresponds to 57–76 (YLLSVFCWYKTLHKLALSKA). Residues 77 to 97 (YALLSMSYVLVWIASMVLPGW) form a helical membrane-spanning segment. The Periplasmic segment spans residues 98 to 100 (EGT). Residues 101–121 (FSLKALLGVACIMSGLMLIFL) traverse the membrane as a helical segment. The Cytoplasmic segment spans residues 122–128 (PTTKQRY).

The protein belongs to the ArnF family. In terms of assembly, heterodimer of ArnE and ArnF.

It localises to the cell inner membrane. The protein operates within bacterial outer membrane biogenesis; lipopolysaccharide biosynthesis. Translocates 4-amino-4-deoxy-L-arabinose-phosphoundecaprenol (alpha-L-Ara4N-phosphoundecaprenol) from the cytoplasmic to the periplasmic side of the inner membrane. The polypeptide is Probable 4-amino-4-deoxy-L-arabinose-phosphoundecaprenol flippase subunit ArnF (Shigella sonnei (strain Ss046)).